The primary structure comprises 601 residues: Translation initiation factor IF-2 (601 aa).

Residues Gly-54–Glu-101 form a disordered region. Residues Ala-57 to Thr-89 are compositionally biased toward low complexity. One can recognise a tr-type G domain in the interval His-104 to Arg-273. Residues Gly-113–Thr-120 form a G1 region. Position 113-120 (Gly-113–Thr-120) interacts with GTP. The interval Gly-138 to His-142 is G2. Residues Asp-159–Gly-162 form a G3 region. GTP contacts are provided by residues Asp-159 to His-163 and Asn-213 to Asp-216. Residues Asn-213–Asp-216 form a G4 region. Residues Ser-249 to Lys-251 are G5.

It belongs to the TRAFAC class translation factor GTPase superfamily. Classic translation factor GTPase family. IF-2 subfamily.

The protein localises to the cytoplasm. Functionally, one of the essential components for the initiation of protein synthesis. Protects formylmethionyl-tRNA from spontaneous hydrolysis and promotes its binding to the 30S ribosomal subunits. Also involved in the hydrolysis of GTP during the formation of the 70S ribosomal complex. This Deinococcus geothermalis (strain DSM 11300 / CIP 105573 / AG-3a) protein is Translation initiation factor IF-2.